A 98-amino-acid chain; its full sequence is NADH-ubiquinone oxidoreductase chain 4L (98 aa).

3 helical membrane passes run 1–21 (MTTM…GVYI), 29–49 (TLLC…LTLL), and 59–79 (FPLI…ALLV).

Belongs to the complex I subunit 4L family. Core subunit of respiratory chain NADH dehydrogenase (Complex I) which is composed of 45 different subunits.

The protein resides in the mitochondrion inner membrane. The enzyme catalyses a ubiquinone + NADH + 5 H(+)(in) = a ubiquinol + NAD(+) + 4 H(+)(out). Core subunit of the mitochondrial membrane respiratory chain NADH dehydrogenase (Complex I) which catalyzes electron transfer from NADH through the respiratory chain, using ubiquinone as an electron acceptor. Part of the enzyme membrane arm which is embedded in the lipid bilayer and involved in proton translocation. This is NADH-ubiquinone oxidoreductase chain 4L (MT-ND4L) from Zaglossus bruijni (Western long-beaked echidna).